An 85-amino-acid chain; its full sequence is U4-theraphotoxin-Hhn1c (85 aa).

An N-terminal signal peptide occupies residues 1-22 (MKVTLIAILTCAAVLVLHTTAA). The propeptide occupies 23–48 (EELEAESQLMEVGMPDTELAAVDEER). 3 disulfide bridges follow: Cys-52-Cys-66, Cys-56-Cys-77, and Cys-71-Cys-82.

Belongs to the neurotoxin 12 (Hwtx-2) family. 02 (Hwtx-2) subfamily. As to expression, expressed by the venom gland.

It localises to the secreted. In terms of biological role, postsynaptic neurotoxin. In Cyriopagopus hainanus (Chinese bird spider), this protein is U4-theraphotoxin-Hhn1c.